We begin with the raw amino-acid sequence, 366 residues long: Isocitrate dehydrogenase [NAD] subunit alpha, mitochondrial (366 aa).

The N-terminal 27 residues, 1–27 (MAGPAWISKVSRLLGAFHNQKQVTRGF), are a transit peptide targeting the mitochondrion. At lysine 77 the chain carries N6-succinyllysine. Threonine 101 bears the Phosphothreonine mark. Substrate-binding residues include arginine 115, arginine 125, and arginine 146. Lysine 223 is modified (N6-acetyllysine). Positions 233, 257, and 261 each coordinate Mg(2+). Lysine 343 is subject to N6-acetyllysine; alternate. Residue lysine 343 is modified to N6-succinyllysine; alternate. Lysine 350 carries the post-translational modification N6-succinyllysine.

Belongs to the isocitrate and isopropylmalate dehydrogenases family. Heterooligomer of subunits alpha (IDH3A), beta (IDH3B), and gamma (IDH3G) in the apparent ratio of 2:1:1. The heterodimer containing one IDH3A and one IDH3B subunit and the heterodimer containing one IDH3A and one IDH3G subunit assemble into a heterotetramer (which contains two subunits of IDH3A, one of IDH3B and one of IDH3G) and further into the heterooctamer. Mg(2+) serves as cofactor. Mn(2+) is required as a cofactor.

Its subcellular location is the mitochondrion. It carries out the reaction D-threo-isocitrate + NAD(+) = 2-oxoglutarate + CO2 + NADH. Its activity is regulated as follows. The heterotetramer and the heterodimer composed of IDH3A and IDH3G subunits can be allosterically activated by citrate (CIT) or/and ADP, and the two activators can act independently or synergistically. The heterodimer composed of IDH3A and IDH3B subunits cannot be allosterically regulated and the allosteric regulation of the heterotetramer is through the IDH3G subunit and not the IDH3B subunit. The IDH3G subunit contains the allosteric site which consists of a CIT-binding site and an ADP-binding site, and the binding of CIT and ADP causes conformational changes at the allosteric site which are transmitted to the active site in the catalytic subunit (IDH3A) through a cascade of conformational changes at the heterodimer interface, leading to stabilization of the isocitrate-binding at the active site and thus activation of the enzyme. ATP can activate the heterotetramer and the heterodimer composed of IDH3A and IDH3G subunits at low concentrations but inhibits their activities at high concentrations, whereas ATP exhibits only inhibitory effect on the heterodimer composed of IDH3A and IDH3B subunits. In terms of biological role, catalytic subunit of the enzyme which catalyzes the decarboxylation of isocitrate (ICT) into alpha-ketoglutarate. The heterodimer composed of the alpha (IDH3A) and beta (IDH3B) subunits and the heterodimer composed of the alpha (IDH3A) and gamma (IDH3G) subunits, have considerable basal activity but the full activity of the heterotetramer (containing two subunits of IDH3A, one of IDH3B and one of IDH3G) requires the assembly and cooperative function of both heterodimers. The protein is Isocitrate dehydrogenase [NAD] subunit alpha, mitochondrial of Bos taurus (Bovine).